We begin with the raw amino-acid sequence, 226 residues long: Insulin-like growth factor-binding protein 6 (226 aa).

A signal peptide spans 1–25 (MTWDGLPTQPLLMLLMLLFAAGSES). An IGFBP N-terminal domain is found at 26 to 99 (ALAGCPGCGP…LIGQGRCQRA (74 aa)). 4 disulfide bridges follow: cysteine 30–cysteine 33, cysteine 49–cysteine 55, cysteine 63–cysteine 76, and cysteine 70–cysteine 96. Residues 92–148 (GQGRCQRARGPSEETTKESKPHGGASRPRDRDRQKNPRTSAAPIRPSPVQDGEMGPC) form a disordered region. Basic and acidic residues predominate over residues 101-126 (GPSEETTKESKPHGGASRPRDRDRQK). One can recognise a Thyroglobulin type-1 domain in the interval 145-220 (MGPCRRHLDS…SPDGQGSSQC (76 aa)). Intrachain disulfides connect cysteine 148–cysteine 176, cysteine 187–cysteine 198, and cysteine 200–cysteine 220. The disordered stretch occupies residues 205–226 (GQPLPVSPDGQGSSQCSARSSG). Positions 214–226 (GQGSSQCSARSSG) are enriched in polar residues.

As to quaternary structure, interacts (via C-terminal domain) with PHB2. O-glycosylated.

The protein resides in the secreted. Its function is as follows. IGF-binding proteins prolong the half-life of the IGFs and have been shown to either inhibit or stimulate the growth promoting effects of the IGFs on cell culture. They alter the interaction of IGFs with their cell surface receptors. Activates the MAPK signaling pathway and induces cell migration. This Rattus norvegicus (Rat) protein is Insulin-like growth factor-binding protein 6 (Igfbp6).